The following is a 402-amino-acid chain: D-mannonate dehydratase (402 aa).

Positions 37 and 122 each coordinate substrate. Tyrosine 159 (proton donor/acceptor) is an active-site residue. Aspartate 210 contacts Mg(2+). The active-site Proton donor/acceptor is the histidine 212. Positions 236 and 262 each coordinate Mg(2+). Residues glutamate 262, arginine 283, histidine 312, aspartate 316, and glutamate 339 each coordinate substrate.

It belongs to the mandelate racemase/muconate lactonizing enzyme family. GalD subfamily. Requires Mg(2+) as cofactor.

It catalyses the reaction D-mannonate = 2-dehydro-3-deoxy-D-gluconate + H2O. The protein operates within carbohydrate metabolism; pentose and glucuronate interconversion. Catalyzes the dehydration of D-mannonate. Has no detectable activity with a panel of 70 other acid sugars (in vitro). In Rhizorhabdus wittichii (strain DSM 6014 / CCUG 31198 / JCM 15750 / NBRC 105917 / EY 4224 / RW1) (Sphingomonas wittichii), this protein is D-mannonate dehydratase.